The chain runs to 738 residues: Flagellar radial spoke protein 2 (738 aa).

At R104 the chain carries Asymmetric dimethylarginine. 2 stretches are compositionally biased toward acidic residues: residues 134–153 (PDWVAPEDDEAAAVETEDEA) and 161–182 (EGEEPPPEPEPEPEAAPEDGEG). Residues 134-189 (PDWVAPEDDEAAAVETEDEAAGGAALAEGEEPPPEPEPEPEAAPEDGEGDAPAPKI) form a disordered region. R260 carries the asymmetric dimethylarginine modification. A disordered region spans residues 357-426 (AAAEAAAAAP…PPKPKKKKKV (70 aa)). Residues 371–415 (EGEEGEGEAPPAEEEPPAEEEAEEEEEEAEEGAEEGAEEGEEGEE) are compositionally biased toward acidic residues. Asymmetric dimethylarginine is present on residues R453, R538, and R615. The segment at 674–738 (AEAGEGEAVA…SSEESKAAAE (65 aa)) is disordered. The segment covering 689–730 (PAEAEAAPAEGEAAPPAEGEGEAQPAQEGSNSSSSSSDSSSS) has biased composition (low complexity).

The protein belongs to the dpy-30 family. Post-translationally, asymmetrically dimethylated at Arg-104, Arg-260, Arg-453, Arg-538 and Arg-615 during flagellum resorption. Probably methylated by PRMT1.

It localises to the cytoplasm. It is found in the cytoskeleton. The protein resides in the flagellum axoneme. Functionally, flagellar radial spokes contribute to the regulation of dynein arm activity and thus the pattern of flagellar bending. They consist of a thin stalk, which is attached to the a subfiber of the outer doublet microtubule, and a bulbous head, which is attached to the stalk and appears to interact with the projections from the central pair of microtubules. Binds calmodulin in a calcium-dependent manner. This is Flagellar radial spoke protein 2 from Chlamydomonas reinhardtii (Chlamydomonas smithii).